The primary structure comprises 218 residues: Thiopurine S-methyltransferase (218 aa).

W10, L45, E66, and R123 together coordinate S-adenosyl-L-methionine.

Belongs to the class I-like SAM-binding methyltransferase superfamily. TPMT family.

The protein resides in the cytoplasm. The catalysed reaction is S-adenosyl-L-methionine + a thiopurine = S-adenosyl-L-homocysteine + a thiopurine S-methylether.. This Pseudomonas paraeruginosa (strain DSM 24068 / PA7) (Pseudomonas aeruginosa (strain PA7)) protein is Thiopurine S-methyltransferase.